We begin with the raw amino-acid sequence, 200 residues long: MDSSTAHSPVFLVFPPEITASEYESTELSATTFSTQSPLQKLFARKMKILGTIQILFGIMTFSFGVIFLFTLLKPYPRFPFIFLSGYPFWGSVLFINSGAFLIAVKRKTTETLIILSRIMNFLSALGAIAGIILLTFGFILDQNYICGYSHQNSQCKAVTVLFLGILITLMTFSIIELFISLPFSILGCHSEDCDCEQCC.

Residues 1–52 (MDSSTAHSPVFLVFPPEITASEYESTELSATTFSTQSPLQKLFARKMKILGT) lie on the Cytoplasmic side of the membrane. Residues 53 to 73 (IQILFGIMTFSFGVIFLFTLL) traverse the membrane as a helical segment. Residues 74–80 (KPYPRFP) lie on the Extracellular side of the membrane. The chain crosses the membrane as a helical span at residues 81–101 (FIFLSGYPFWGSVLFINSGAF). Residues 102–120 (LIAVKRKTTETLIILSRIM) lie on the Cytoplasmic side of the membrane. A helical membrane pass occupies residues 121–141 (NFLSALGAIAGIILLTFGFIL). Over 142-159 (DQNYICGYSHQNSQCKAV) the chain is Extracellular. A helical transmembrane segment spans residues 160–180 (TVLFLGILITLMTFSIIELFI). The Cytoplasmic segment spans residues 181 to 200 (SLPFSILGCHSEDCDCEQCC).

It belongs to the MS4A family. In terms of tissue distribution, expressed at high level in the testis. Detected also in the pancreas, heart and in the brain.

The protein resides in the membrane. In terms of biological role, may be involved in signal transduction as a component of a multimeric receptor complex. In Homo sapiens (Human), this protein is Membrane-spanning 4-domains subfamily A member 5 (MS4A5).